Here is a 332-residue protein sequence, read N- to C-terminus: T-cell surface glycoprotein CD1b2 (332 aa).

Positions 1–17 (MLLLVLALLAVLFPAGD) are cleaved as a signal peptide. Over 18 to 301 (TQDAFPEPIS…ILYWGNSSIG (284 aa)) the chain is Extracellular. Asn38, Asn75, and Asn146 each carry an N-linked (GlcNAc...) asparagine glycan. 3 cysteine pairs are disulfide-bonded: Cys120-Cys184, Cys149-Cys163, and Cys224-Cys279. The 111-residue stretch at 185–295 (PRYLMSVLEA…LGGQDIILYW (111 aa)) folds into the Ig-like domain. Asn297 is a glycosylation site (N-linked (GlcNAc...) asparagine). A helical membrane pass occupies residues 302–322 (WIILAVFVSCLIVLLFYVLWF). Topologically, residues 323–332 (YKHWSYQDIL) are cytoplasmic. The short motif at 328–331 (YQDI) is the Internalization signal element.

In terms of assembly, heterodimer with B2M (beta-2-microglobulin). Interacts with saposin C.

It is found in the cell membrane. It localises to the endosome membrane. Its subcellular location is the lysosome membrane. Functionally, antigen-presenting protein that binds self and non-self lipid and glycolipid antigens and presents them to T-cell receptors on natural killer T-cells. The sequence is that of T-cell surface glycoprotein CD1b2 (CD1B2) from Cavia porcellus (Guinea pig).